A 26-amino-acid polypeptide reads, in one-letter code: Acetylcholine receptor subunit delta (26 aa).

It belongs to the ligand-gated ion channel (TC 1.A.9) family. Acetylcholine receptor (TC 1.A.9.1) subfamily. As to quaternary structure, pentamer of two alpha chains, and one each of the beta, delta, and gamma chains.

Its subcellular location is the postsynaptic cell membrane. The protein resides in the cell membrane. It catalyses the reaction K(+)(in) = K(+)(out). The catalysed reaction is Na(+)(in) = Na(+)(out). After binding acetylcholine, the AChR responds by an extensive change in conformation that affects all subunits and leads to opening of an ion-conducting channel across the plasma membrane. In Electrophorus electricus (Electric eel), this protein is Acetylcholine receptor subunit delta (chrnd).